A 229-amino-acid polypeptide reads, in one-letter code: Potassium/proton antiporter CemA (229 aa).

3 helical membrane passes run 7-27, 107-127, and 189-209; these read FTPL…SLSF, ILHF…SLLG, and IISG…KYWI.

It belongs to the CemA family.

It is found in the plastid. The protein resides in the chloroplast inner membrane. It catalyses the reaction K(+)(in) + H(+)(out) = K(+)(out) + H(+)(in). Its function is as follows. Contributes to K(+)/H(+) antiport activity by supporting proton efflux to control proton extrusion and homeostasis in chloroplasts in a light-dependent manner to modulate photosynthesis. Prevents excessive induction of non-photochemical quenching (NPQ) under continuous-light conditions. Indirectly promotes efficient inorganic carbon uptake into chloroplasts. The sequence is that of Potassium/proton antiporter CemA from Lactuca sativa (Garden lettuce).